The chain runs to 766 residues: Serine/threonine-protein kinase tousled-like 1 (766 aa).

M1 is modified (N-acetylmethionine). Positions 1–19 (MSVQSSSGSLEGPPSWSQL) are enriched in polar residues. The tract at residues 1-197 (MSVQSSSGSL…SPSPTALAFG (197 aa)) is disordered. The span at 20 to 33 (STSPTPGSAAAARS) shows a compositional bias: low complexity. T38 carries the post-translational modification Phosphothreonine. Positions 43 to 64 (RPREGAMDELHSLDPRRQELLE) are enriched in basic and acidic residues. 3 positions are modified to phosphoserine: S54, S77, and S80. The segment covering 68–85 (TGVASGSTGSTGSCSVGA) has biased composition (low complexity). Polar residues predominate over residues 87-103 (ASTNNESSNHSFGSLGS). Basic and acidic residues predominate over residues 105–121 (SDKESETPEKKQSESSR). A phosphoserine mark is found at S134, S159, S174, and S176. Positions 170–192 (SPQNSHSHSTPSSSVRPNSPSPT) are enriched in low complexity. Positions 230–281 (QDLEKKEGRIDDLLRANCDLRRQIDEQQKLLEKYKERLNKCISMSKKLLIEK) form a coiled coil. The segment at 346 to 383 (LAKRKPPTANNSQAPSTNSEPKQRKNKAVNGAENDPFV) is disordered. Positions 353 to 365 (TANNSQAPSTNSE) are enriched in polar residues. Positions 397 to 445 (HEQEEIFKLRLGHLKKEEAEIQAELERLERVRNLHIRELKRINNEDNSQ) form a coiled coil. A Protein kinase domain is found at 456 to 734 (YLLLHLLGRG…VHQLANDPYL (279 aa)). ATP contacts are provided by residues 462 to 470 (LGRGGFSEV) and K485. D586 serves as the catalytic Proton acceptor. S743 carries the phosphoserine modification.

It belongs to the protein kinase superfamily. Ser/Thr protein kinase family. Heterodimer with TLK2. Requires Mg(2+) as cofactor. As to expression, widely expressed. Present in fetal placenta, liver, kidney and pancreas but not heart or skeletal muscle. Also found in adult cell lines. Isoform 3 is ubiquitously expressed in all tissues examined.

The protein resides in the nucleus. The catalysed reaction is L-seryl-[protein] + ATP = O-phospho-L-seryl-[protein] + ADP + H(+). It carries out the reaction L-threonyl-[protein] + ATP = O-phospho-L-threonyl-[protein] + ADP + H(+). Its activity is regulated as follows. Cell-cycle regulated, maximal activity in S-phase. Inactivated by phosphorylation at Ser-743, potentially by CHEK1. In terms of biological role, rapidly and transiently inhibited by phosphorylation following the generation of DNA double-stranded breaks during S-phase. This is cell cycle checkpoint and ATM-pathway dependent and appears to regulate processes involved in chromatin assembly. Isoform 3 phosphorylates and enhances the stability of the t-SNARE SNAP23, augmenting its assembly with syntaxin. Isoform 3 protects the cells from the ionizing radiation by facilitating the repair of DSBs. In vitro, phosphorylates histone H3 at 'Ser-10'. In Homo sapiens (Human), this protein is Serine/threonine-protein kinase tousled-like 1 (TLK1).